A 426-amino-acid chain; its full sequence is F-box protein At2g15640 (426 aa).

The 48-residue stretch at 1–48 (MNPSTITNDLTVEILSRLPAKSVARFHCVSKQWGSIFGSPYFKELFLT) folds into the F-box domain.

The protein is F-box protein At2g15640 of Arabidopsis thaliana (Mouse-ear cress).